The sequence spans 247 residues: MELDIDLPDFGPFEGGAPVSEFSSPDNPVFGLDLSGSLHSSVMSVSPTELLLTENLMSAPGSTALTHLTTPSGYDTSPAFTEDWNASPLFAQNDFETAQEWPSLFPDAETSAAPAPALAAPAPVPAAQAEDSPSVDSEDFEPARRPSQARKSSASSSPSGRHSSVSGVSARRRGKPLPPITIDDPSDTVGMKRAKNTLAARKSRARKAERMDELERQVRELEAEKEKLAAELAHWKSLASSQGAAGQ.

Composition is skewed to low complexity over residues 107–129 and 145–169; these read DAETSAAPAPALAAPAPVPAAQA and RPSQARKSSASSSPSGRHSSVSGVS. Residues 107–213 are disordered; the sequence is DAETSAAPAP…RARKAERMDE (107 aa). Residues 186–247 enclose the bZIP domain; sequence SDTVGMKRAK…LASSQGAAGQ (62 aa). The basic motif stretch occupies residues 192–210; sequence KRAKNTLAARKSRARKAER. Residues 214 to 228 form a leucine-zipper region; sequence LERQVRELEAEKEKL.

It belongs to the bZIP family. GCN4 subfamily. As to quaternary structure, binds DNA as a dimer.

Its subcellular location is the nucleus. Functionally, general amino acid control transactivator. Binds to the AP-1 consensus DNA binding element 5'-[AG]TGACTCAT-3'. The polypeptide is Cross-pathway control protein 1 (CPC-1) (Cryphonectria parasitica (Chestnut blight fungus)).